An 88-amino-acid chain; its full sequence is UPF0297 protein LACR_0137 (88 aa).

Belongs to the UPF0297 family.

This Lactococcus lactis subsp. cremoris (strain SK11) protein is UPF0297 protein LACR_0137.